Reading from the N-terminus, the 174-residue chain is Peptide deformylase (174 aa).

2 residues coordinate Fe cation: Cys96 and His138. Glu139 is a catalytic residue. A Fe cation-binding site is contributed by His142.

The protein belongs to the polypeptide deformylase family. Requires Fe(2+) as cofactor.

It catalyses the reaction N-terminal N-formyl-L-methionyl-[peptide] + H2O = N-terminal L-methionyl-[peptide] + formate. In terms of biological role, removes the formyl group from the N-terminal Met of newly synthesized proteins. Requires at least a dipeptide for an efficient rate of reaction. N-terminal L-methionine is a prerequisite for activity but the enzyme has broad specificity at other positions. The protein is Peptide deformylase of Nautilia profundicola (strain ATCC BAA-1463 / DSM 18972 / AmH).